Consider the following 402-residue polypeptide: UDP-glucose 6-dehydrogenase (402 aa).

NAD(+) is bound by residues 2–19, V11, D29, K34, T83, T118, and E145; that span reads KIAV…GVLL. Substrate-binding positions include 141 to 145, K204, N208, 249 to 253, and G257; these read EFLRE and YNNPS. Y259 contributes to the NAD(+) binding site. C260 serves as the catalytic Nucleophile. An NAD(+)-binding site is contributed by K263. A substrate-binding site is contributed by K320. R327 provides a ligand contact to NAD(+).

Belongs to the UDP-glucose/GDP-mannose dehydrogenase family.

The catalysed reaction is UDP-alpha-D-glucose + 2 NAD(+) + H2O = UDP-alpha-D-glucuronate + 2 NADH + 3 H(+). The protein operates within nucleotide-sugar biosynthesis; UDP-alpha-D-glucuronate biosynthesis; UDP-alpha-D-glucuronate from UDP-alpha-D-glucose: step 1/1. Catalyzes the formation of UDP-glucuronic acid which is required for capsular hyaluronic acid synthesis. The chain is UDP-glucose 6-dehydrogenase (hasB) from Streptococcus pyogenes serotype M3 (strain ATCC BAA-595 / MGAS315).